We begin with the raw amino-acid sequence, 666 residues long: Endogenous retrovirus group K member 19 Gag polyprotein (666 aa).

Residue glycine 2 is the site of N-myristoyl glycine attachment. 2 disordered regions span residues 170–189 and 223–264; these read LVGP…AGQV and PLES…GSEL. A compositionally biased stretch (pro residues) spans 232-247; sequence GMPPAPQGRAPYPQPP. CCHC-type zinc fingers lie at residues 544-561 and 580-597; these read GKCY…NCPV and DLCP…QCRS. The interval 598-640 is disordered; that stretch reads KFDKNGQPLSGNEQRGQPQAPQQTGAFPIQPFVPHGFQGQQPP. Positions 604–622 are enriched in polar residues; that stretch reads QPLSGNEQRGQPQAPQQTG.

The protein belongs to the beta type-B retroviral Gag protein family. HERV class-II K(HML-2) gag subfamily. In terms of processing, myristoylation is essential for retroviral assembly. Alteration of the glycine residue leads to a block in the budding of particles and an accumulation of Gag inside the cell. Post-translationally, specific enzymatic cleavages may yield mature proteins.

Its subcellular location is the cell membrane. The products of the Gag polyproteins of infectious retroviruses perform highly complex orchestrated tasks during the assembly, budding, maturation, and infection stages of the viral replication cycle. During viral assembly, the proteins form membrane associations and self-associations that ultimately result in budding of an immature virion from the infected cell. Gag precursors also function during viral assembly to selectively bind and package two plus strands of genomic RNA. Endogenous Gag proteins may have kept, lost or modified their original function during evolution. This Homo sapiens (Human) protein is Endogenous retrovirus group K member 19 Gag polyprotein (ERVK-19).